The chain runs to 379 residues: Chaperone protein DnaJ (379 aa).

In terms of domain architecture, J spans 5–70 (DYYEVLGVEK…QKRAAYDQYG (66 aa)). Residues 133-211 (GKSVEIRVPT…CHGQGRVEKT (79 aa)) form a CR-type zinc finger. 8 residues coordinate Zn(2+): C146, C149, C163, C166, C185, C188, C199, and C202. 4 CXXCXGXG motif repeats span residues 146-153 (CDTCDGSG), 163-170 (CTTCHGQG), 185-192 (CPTCGGKG), and 199-206 (CDVCHGQG).

The protein belongs to the DnaJ family. In terms of assembly, homodimer. It depends on Zn(2+) as a cofactor.

It localises to the cytoplasm. Functionally, participates actively in the response to hyperosmotic and heat shock by preventing the aggregation of stress-denatured proteins and by disaggregating proteins, also in an autonomous, DnaK-independent fashion. Unfolded proteins bind initially to DnaJ; upon interaction with the DnaJ-bound protein, DnaK hydrolyzes its bound ATP, resulting in the formation of a stable complex. GrpE releases ADP from DnaK; ATP binding to DnaK triggers the release of the substrate protein, thus completing the reaction cycle. Several rounds of ATP-dependent interactions between DnaJ, DnaK and GrpE are required for fully efficient folding. Also involved, together with DnaK and GrpE, in the DNA replication of plasmids through activation of initiation proteins. This Pseudoalteromonas atlantica (strain T6c / ATCC BAA-1087) protein is Chaperone protein DnaJ.